The primary structure comprises 264 residues: Rano class II histocompatibility antigen, D-1 beta chain (264 aa).

The signal sequence occupies residues 1–26; the sequence is MVWLARDSCVAAVILLLTVLSPPVAL. The tract at residues 27–120 is beta-1; it reads VRDPTPRFLE…EISESFLVPR (94 aa). Over 27-226 the chain is Extracellular; the sequence is VRDPTPRFLE…AQSTSAQNKK (200 aa). Cystine bridges form between C42/C106 and C144/C200. N46 carries an N-linked (GlcNAc...) asparagine glycan. Residues 121-215 form a beta-2 region; the sequence is TVEPKVTVYP…SLPSPVRVEW (95 aa). One can recognise an Ig-like C1-type domain in the interval 124 to 228; the sequence is PKVTVYPSKT…STSAQNKKMS (105 aa). Positions 216-226 are connecting peptide; the sequence is KAQSTSAQNKK. The chain crosses the membrane as a helical span at residues 227-248; it reads MSGVGGIVLGLLFLGAGLFVYF. At 249 to 264 the chain is on the cytoplasmic side; that stretch reads RNQKGQSGLQPTGLLN.

This sequence belongs to the MHC class II family.

It is found in the membrane. Functionally, involved in the presentation of foreign antigens to the immune system. The protein is Rano class II histocompatibility antigen, D-1 beta chain (RT1-Db1) of Rattus norvegicus (Rat).